A 435-amino-acid chain; its full sequence is N-lysine methyltransferase SMYD2-A (435 aa).

Residues 7-241 (EGTERFLSPG…PEEEIFNSYI (235 aa)) enclose the SET domain. 17–19 (KGR) serves as a coordination point for S-adenosyl-L-methionine. The Zn(2+) site is built by Cys-52, Cys-55, Cys-65, Cys-68, Cys-74, Cys-78, His-86, and Cys-90. The segment at 52–90 (CECCFTRKEGLSKCGKCKQAYYCNVECQRGDWPMHKLEC) adopts an MYND-type zinc-finger fold. S-adenosyl-L-methionine contacts are provided by residues His-137, 206-207 (NH), and 258-260 (YFF).

It belongs to the class V-like SAM-binding methyltransferase superfamily.

The protein resides in the cytoplasm. It localises to the cytosol. The protein localises to the nucleus. The enzyme catalyses L-lysyl(4)-[histone H3] + 3 S-adenosyl-L-methionine = N(6),N(6),N(6)-trimethyl-L-lysyl(4)-[histone H3] + 3 S-adenosyl-L-homocysteine + 3 H(+). It carries out the reaction L-lysyl-[protein] + S-adenosyl-L-methionine = N(6)-methyl-L-lysyl-[protein] + S-adenosyl-L-homocysteine + H(+). In terms of biological role, protein-lysine N-methyltransferase that methylates both histones and non-histone proteins, including p53/TP53 and RB1. Specifically trimethylates histone H3 'Lys-4' (H3K4me3) in vivo. The activity requires interaction with HSP90alpha. Shows even higher methyltransferase activity on p53/TP53. Monomethylates 'Lys-370' of p53/TP53, leading to decreased DNA-binding activity and subsequent transcriptional regulation activity of p53/TP53. Monomethylates RB1 at 'Lys-860'. This Danio rerio (Zebrafish) protein is N-lysine methyltransferase SMYD2-A (smyd2a).